Consider the following 418-residue polypeptide: eIF5-mimic protein 2 (418 aa).

Over residues 1–14 (MNQKQQKPTLSGQR) the composition is skewed to polar residues. The tract at residues 1-25 (MNQKQQKPTLSGQRFKTRKRDEKER) is disordered. Residues 246–413 (NQQTIGARKE…KNAEEESESE (168 aa)) form the W2 domain.

Belongs to the BZW family.

Translation initiation regulator which may repress repeat-associated non-AUG (RAN) initiated translation probably by acting as a competitive inhibitor of eukaryotic translation initiation factor 5 (EIF5) function. Enhances histone H4 gene transcription but does not seem to bind DNA directly. This is eIF5-mimic protein 2 (BZW1) from Gallus gallus (Chicken).